Consider the following 426-residue polypeptide: MDNEIVALCGFFVAIALVLSCISIITHLKNYKKPVLQRSVVRILMMIVIYSSVSFLSVYNEKIGSIFEPFREIYEAFALYCFFCLLIDYLGGERAAVISLHGHLPRPRLWPLNYLQDDIDLSDPYTFLSIKRGILQYTWLKPFLVIAVLLTKVTGVYDREDQPVYASADLWIGLVYNISITLSLYSLTTFWVCLHEELAPFRPFPKFLSVKAIIFASYWQQTVLSITNWLGLLNGTGWIYSLLNQNVLMCLEMPFFALSHWYAFRIEDYDTPTWLSCARLPLLKAFKDVIGLKDVWCDSLQTLHGDRYVYQNFEPGENLIPSRNDGRINRTSHGLRYSQGGQSKYWISRYDQSRVRLINNSQNSPQSNKSYFSIPGMSTSHFENGLQFEIDDEMEPLYNQAKQMRYGDYNYPVLLVNNTHASSSYT.

Transmembrane regions (helical) follow at residues 39–59 (SVVR…LSVY), 73–93 (IYEA…LGGE), 133–153 (GILQ…LTKV), 172–192 (IGLV…TFWV), and 223–243 (VLSI…YSLL). Ser364 bears the Phosphoserine mark. Residues 386 to 409 (LQFEIDDEMEPLYNQAKQMRYGDY) form an ATG8-interacting region region.

Belongs to the TMEM184 family. As to quaternary structure, interacts with atg8.

Its subcellular location is the vacuole membrane. Its function is as follows. Vacuole membrane protein that recruits ATG8 to facilitate the degradation of vacuolar integral membrane proteins during early-stationary vacuole turnover (EVT) when cells enter stationary phase. This chain is Vacuole membrane protein hfl11, found in Schizosaccharomyces pombe (strain 972 / ATCC 24843) (Fission yeast).